The primary structure comprises 363 residues: tRNA N6-adenosine threonylcarbamoyltransferase (363 aa).

The Fe cation site is built by H127 and H131. Residues 150–154 (LISGG), D183, G196, and N290 contribute to the substrate site. D318 contributes to the Fe cation binding site.

Belongs to the KAE1 / TsaD family. It depends on Fe(2+) as a cofactor.

Its subcellular location is the cytoplasm. It catalyses the reaction L-threonylcarbamoyladenylate + adenosine(37) in tRNA = N(6)-L-threonylcarbamoyladenosine(37) in tRNA + AMP + H(+). Required for the formation of a threonylcarbamoyl group on adenosine at position 37 (t(6)A37) in tRNAs that read codons beginning with adenine. Is involved in the transfer of the threonylcarbamoyl moiety of threonylcarbamoyl-AMP (TC-AMP) to the N6 group of A37, together with TsaE and TsaB. TsaD likely plays a direct catalytic role in this reaction. In Zymomonas mobilis subsp. mobilis (strain ATCC 31821 / ZM4 / CP4), this protein is tRNA N6-adenosine threonylcarbamoyltransferase.